The primary structure comprises 90 residues: Small ribosomal subunit protein uS15c (90 aa).

It belongs to the universal ribosomal protein uS15 family. Part of the 30S ribosomal subunit.

It localises to the plastid. The protein resides in the chloroplast. The polypeptide is Small ribosomal subunit protein uS15c (rps15-A) (Ipomoea purpurea (Common morning glory)).